Here is a 616-residue protein sequence, read N- to C-terminus: Chaperone protein HscA (616 aa).

Belongs to the heat shock protein 70 family.

Chaperone involved in the maturation of iron-sulfur cluster-containing proteins. Has a low intrinsic ATPase activity which is markedly stimulated by HscB. Involved in the maturation of IscU. The protein is Chaperone protein HscA of Escherichia coli (strain SMS-3-5 / SECEC).